Consider the following 1142-residue polypeptide: E3 ubiquitin-protein ligase TRIM33 (1142 aa).

Gly residues predominate over residues 1–18; it reads MAENKGGGEAESGGGGSG. The interval 1 to 132 is disordered; it reads MAENKGGGEA…PGSSSGPPLG (132 aa). The tract at residues 1 to 163 is necessary for E3 ubiquitin-protein ligase activity and repression of SMAD4 signaling and transcriptional repression; it reads MAENKGGGEA…AEPKLLPCLH (163 aa). Residues 19-42 show a composition bias toward low complexity; the sequence is SAPVTAGAAGPTAQEAEPPLAAVL. The segment covering 52–64 has biased composition (gly residues); that stretch reads RAGAEGGAAGPDD. Low complexity predominate over residues 65–99; the sequence is GGVAAASSSSAPAASVPAASVGSAVPGGAASTPAP. Residues 100–122 are compositionally biased toward pro residues; that stretch reads AAAPAPAPAPAPAPAPAPAPAPA. The RING-type zinc-finger motif lies at 141 to 201; the sequence is CAVCQQSLQS…VGVIRCPVCR (61 aa). 2 B box-type zinc fingers span residues 228 to 275 and 287 to 328; these read KSEQ…IRKK and QRPV…YQFL. The Zn(2+) site is built by Cys233, Cys236, Cys257, His261, Cys292, His295, Cys315, and His320. The necessary for oligomerization stretch occupies residues 315 to 417; that stretch reads CQLLEHKEHR…QMKLLQQQND (103 aa). Residues 315 to 417 adopt a coiled-coil conformation; the sequence is CQLLEHKEHR…QMKLLQQQND (103 aa). Glycyl lysine isopeptide (Lys-Gly) (interchain with G-Cter in SUMO2) cross-links involve residues Lys345, Lys350, Lys497, and Lys520. At Arg531 the chain carries Asymmetric dimethylarginine; alternate. Arg531 carries the post-translational modification Omega-N-methylarginine; alternate. Lys543 participates in a covalent cross-link: Glycyl lysine isopeptide (Lys-Gly) (interchain with G-Cter in SUMO2). The residue at position 551 (Arg551) is an Omega-N-methylarginine. Asymmetric dimethylarginine is present on Arg593. Asymmetric dimethylarginine; alternate is present on Arg607. At Arg607 the chain carries Omega-N-methylarginine; alternate. An asymmetric dimethylarginine mark is found at Arg614 and Arg620. Disordered regions lie at residues 657-676, 688-707, and 718-834; these read PTSP…TSPS, NPEN…EDAG, and YISG…PPLS. The span at 738–774 shows a compositional bias: low complexity; that stretch reads PSALSPGSSGLSNSHTPVRPPSTSSTGSRGSCGSSGR. Composition is skewed to basic and acidic residues over residues 775 to 794 and 808 to 817; these read TAEK…KQEP and KQEKTEDGRR. Lys778 and Lys784 each carry N6-acetyllysine; alternate. Residues Lys778 and Lys784 each participate in a glycyl lysine isopeptide (Lys-Gly) (interchain with G-Cter in SUMO2); alternate cross-link. Residue Lys789 forms a Glycyl lysine isopeptide (Lys-Gly) (interchain with G-Cter in SUMO2) linkage. Residues Lys791 and Lys808 each participate in a glycyl lysine isopeptide (Lys-Gly) (interchain with G-Cter in SUMO2); alternate cross-link. Glycyl lysine isopeptide (Lys-Gly) (interchain with G-Cter in SUMO1); alternate cross-links involve residues Lys791 and Lys808. The residue at position 808 (Lys808) is an N6-acetyllysine; alternate. Residue Lys811 forms a Glycyl lysine isopeptide (Lys-Gly) (interchain with G-Cter in SUMO2) linkage. Ser818 is modified (phosphoserine). The segment covering 822 to 834 has biased composition (low complexity); it reads LSSPESSLTPPLS. The residue at position 830 (Thr830) is a Phosphothreonine. Lys876 is covalently cross-linked (Glycyl lysine isopeptide (Lys-Gly) (interchain with G-Cter in SUMO2)). The residue at position 877 (Ser877) is a Phosphoserine. The PHD-type zinc finger occupies 902-949; the sequence is EDWCAVCQNGGDLLCCEKCPKVFHLTCHVPTLLSFPSGDWICTFCRDI. Lys966 is subject to N6-acetyllysine. Lys968 carries the post-translational modification N6-acetyllysine; alternate. Lys968 participates in a covalent cross-link: Glycyl lysine isopeptide (Lys-Gly) (interchain with G-Cter in SUMO2); alternate. The Bromo domain occupies 972 to 1095; it reads GLSPVDQRKC…LYFEDKLSEI (124 aa). Residues Lys1022 and Lys1058 each participate in a glycyl lysine isopeptide (Lys-Gly) (interchain with G-Cter in SUMO2) cross-link. Position 1066 is a phosphothreonine (Thr1066). Lys1072 is covalently cross-linked (Glycyl lysine isopeptide (Lys-Gly) (interchain with G-Cter in SUMO2)). A disordered region spans residues 1103-1142; the sequence is PLPEFEQDEDDGEVTEDSDEDFIQPRRKRLKSDERPVHIK. Positions 1107–1124 are enriched in acidic residues; sequence FEQDEDDGEVTEDSDEDF. Thr1117 is modified (phosphothreonine). Ser1120 carries the phosphoserine modification. Residue Lys1133 forms a Glycyl lysine isopeptide (Lys-Gly) (interchain with G-Cter in SUMO2) linkage. A compositionally biased stretch (basic and acidic residues) spans 1133 to 1142; the sequence is KSDERPVHIK. Position 1134 is a phosphoserine (Ser1134).

This sequence belongs to the TRIM/RBCC family. In terms of assembly, homooligomer and heterooligomer with TRIM24 and TRIM28 family members. Interacts with SMAD4 in unstimulated cells. Found in a complex with SMAD2 and SMAD3 upon addition of TGF-beta. Interacts with SMAD2 and SMAD3. Interacts with SMAD4 under basal and induced conditions and, upon TGF-beta signaling, with activated SMAD2. Forms a ternary complex with SMAD4 and SMAD2 upon TGF-beta signaling. Sumoylated with SUMO1. In terms of tissue distribution, ubiquitous with high level in testis.

The protein resides in the nucleus. It catalyses the reaction S-ubiquitinyl-[E2 ubiquitin-conjugating enzyme]-L-cysteine + [acceptor protein]-L-lysine = [E2 ubiquitin-conjugating enzyme]-L-cysteine + N(6)-ubiquitinyl-[acceptor protein]-L-lysine.. Its pathway is protein modification; protein ubiquitination. In terms of biological role, acts as an E3 ubiquitin-protein ligase. Promotes SMAD4 ubiquitination, nuclear exclusion and degradation via the ubiquitin proteasome pathway. May act as a transcriptional repressor. Inhibits the transcriptional response to TGF-beta/BMP signaling cascade. Plays a role in the control of cell proliferation. Its association with SMAD2 and SMAD3 stimulates erythroid differentiation of hematopoietic stem/progenitor. Monoubiquitinates SMAD4 and acts as an inhibitor of SMAD4-dependent TGF-beta/BMP signaling cascade (Monoubiquitination of SMAD4 hampers its ability to form a stable complex with activated SMAD2/3 resulting in inhibition of TGF-beta/BMP signaling cascade). The sequence is that of E3 ubiquitin-protein ligase TRIM33 (Trim33) from Mus musculus (Mouse).